The chain runs to 432 residues: Trigger factor (432 aa).

A PPIase FKBP-type domain is found at 161–246; sequence EDRVTIDFTG…LKKVEERELP (86 aa).

Belongs to the FKBP-type PPIase family. Tig subfamily. Homodimer and monomer. In vivo most of the ribosomes are in complex with monomeric TF. Uncomplexed TF, however, is in a monomer-dimer equilibrium with approximately two thirds of TF existing in a dimeric state.

The protein resides in the cytoplasm. It catalyses the reaction [protein]-peptidylproline (omega=180) = [protein]-peptidylproline (omega=0). In terms of biological role, involved in protein export. Acts as a chaperone by maintaining the newly synthesized protein in an open conformation. Functions as a peptidyl-prolyl cis-trans isomerase. The polypeptide is Trigger factor (Shigella dysenteriae serotype 1 (strain Sd197)).